Here is a 279-residue protein sequence, read N- to C-terminus: BEN domain-containing protein 6 (279 aa).

The segment covering Met-1–Ala-15 has biased composition (polar residues). 2 disordered regions span residues Met-1 to Leu-65 and Arg-134 to Lys-172. The stretch at Leu-62–Gln-99 forms a coiled coil. Residues Arg-134–Cys-148 show a composition bias toward polar residues. Positions Lys-162–Lys-172 are enriched in basic and acidic residues. The region spanning Glu-171 to Lys-271 is the BEN domain.

In terms of assembly, interacts (via BEN domain) with RBPJ.

Its subcellular location is the nucleus. In terms of biological role, acts as a corepressor of recombining binding protein suppressor hairless (RBPJ) and inhibits Notch signaling in neural stem cells, thereby opposing their self-renewal and promoting neurogenesis. This chain is BEN domain-containing protein 6 (BEND6), found in Homo sapiens (Human).